Here is a 308-residue protein sequence, read N- to C-terminus: Porphobilinogen deaminase (308 aa).

C241 is subject to S-(dipyrrolylmethanemethyl)cysteine.

It belongs to the HMBS family. As to quaternary structure, monomer. It depends on dipyrromethane as a cofactor.

It catalyses the reaction 4 porphobilinogen + H2O = hydroxymethylbilane + 4 NH4(+). It functions in the pathway porphyrin-containing compound metabolism; protoporphyrin-IX biosynthesis; coproporphyrinogen-III from 5-aminolevulinate: step 2/4. Functionally, tetrapolymerization of the monopyrrole PBG into the hydroxymethylbilane pre-uroporphyrinogen in several discrete steps. This Staphylococcus aureus (strain MRSA252) protein is Porphobilinogen deaminase.